The sequence spans 662 residues: uncharacterized protein (662 aa).

The FAD site is built by S145, E164, W173, D184, and Y190. The interval 638 to 662 (SRLETSGVPREGVQRPGSRLRRRPS) is disordered.

This sequence belongs to the FAD-binding monooxygenase family. Requires FAD as cofactor.

This is an uncharacterized protein from Sinorhizobium fredii (strain NBRC 101917 / NGR234).